Here is a 269-residue protein sequence, read N- to C-terminus: Formamidopyrimidine-DNA glycosylase (269 aa).

Pro-2 acts as the Schiff-base intermediate with DNA in catalysis. Glu-3 (proton donor) is an active-site residue. Lys-57 (proton donor; for beta-elimination activity) is an active-site residue. DNA is bound by residues His-90, Arg-109, and Lys-150. The segment at 235–269 (QVYGRKGEPCRVCGTPIAATKHAQRATFYCRHCQK) adopts an FPG-type zinc-finger fold. Arg-259 acts as the Proton donor; for delta-elimination activity in catalysis.

The protein belongs to the FPG family. In terms of assembly, monomer. The cofactor is Zn(2+).

The catalysed reaction is Hydrolysis of DNA containing ring-opened 7-methylguanine residues, releasing 2,6-diamino-4-hydroxy-5-(N-methyl)formamidopyrimidine.. It carries out the reaction 2'-deoxyribonucleotide-(2'-deoxyribose 5'-phosphate)-2'-deoxyribonucleotide-DNA = a 3'-end 2'-deoxyribonucleotide-(2,3-dehydro-2,3-deoxyribose 5'-phosphate)-DNA + a 5'-end 5'-phospho-2'-deoxyribonucleoside-DNA + H(+). Involved in base excision repair of DNA damaged by oxidation or by mutagenic agents. Acts as a DNA glycosylase that recognizes and removes damaged bases. Has a preference for oxidized purines, such as 7,8-dihydro-8-oxoguanine (8-oxoG). Has AP (apurinic/apyrimidinic) lyase activity and introduces nicks in the DNA strand. Cleaves the DNA backbone by beta-delta elimination to generate a single-strand break at the site of the removed base with both 3'- and 5'-phosphates. This Salmonella paratyphi B (strain ATCC BAA-1250 / SPB7) protein is Formamidopyrimidine-DNA glycosylase.